Consider the following 232-residue polypeptide: Ribonuclease 3 (232 aa).

The region spanning 7 to 135 (IQAVESKLKF…ILGAVYLDGG (129 aa)) is the RNase III domain. Glutamate 48 contributes to the Mg(2+) binding site. Aspartate 52 is a catalytic residue. 2 residues coordinate Mg(2+): asparagine 121 and glutamate 124. Glutamate 124 is an active-site residue. The DRBM domain occupies 160-229 (NPKNRLQQFT…AKQALSTHDD (70 aa)).

This sequence belongs to the ribonuclease III family. As to quaternary structure, homodimer. Mg(2+) serves as cofactor.

The protein localises to the cytoplasm. The catalysed reaction is Endonucleolytic cleavage to 5'-phosphomonoester.. Its function is as follows. Digests double-stranded RNA. Involved in the processing of primary rRNA transcript to yield the immediate precursors to the large and small rRNAs (23S and 16S). Processes some mRNAs, and tRNAs when they are encoded in the rRNA operon. Processes pre-crRNA and tracrRNA of type II CRISPR loci if present in the organism. This is Ribonuclease 3 from Chlamydia muridarum (strain MoPn / Nigg).